The primary structure comprises 357 residues: 3-isopropylmalate dehydrogenase (357 aa).

Residue 76-89 (GPQWDTIDPALRPE) participates in NAD(+) binding. Arg-96, Arg-106, Arg-134, and Asp-224 together coordinate substrate. 3 residues coordinate Mg(2+): Asp-224, Asp-248, and Asp-252. 282–294 (GSAPDIAGKGIAN) contacts NAD(+).

The protein belongs to the isocitrate and isopropylmalate dehydrogenases family. LeuB type 1 subfamily. As to quaternary structure, homodimer. Requires Mg(2+) as cofactor. The cofactor is Mn(2+).

It is found in the cytoplasm. It carries out the reaction (2R,3S)-3-isopropylmalate + NAD(+) = 4-methyl-2-oxopentanoate + CO2 + NADH. Its pathway is amino-acid biosynthesis; L-leucine biosynthesis; L-leucine from 3-methyl-2-oxobutanoate: step 3/4. In terms of biological role, catalyzes the oxidation of 3-carboxy-2-hydroxy-4-methylpentanoate (3-isopropylmalate) to 3-carboxy-4-methyl-2-oxopentanoate. The product decarboxylates to 4-methyl-2 oxopentanoate. In Xanthomonas axonopodis pv. citri (strain 306), this protein is 3-isopropylmalate dehydrogenase.